Here is a 479-residue protein sequence, read N- to C-terminus: Gamma-aminobutyric acid receptor subunit rho-1 (479 aa).

The first 21 residues, 1–21, serve as a signal peptide directing secretion; that stretch reads MLAVPNMRFGIFLLWWGWVLA. At 22 to 280 the chain is on the extracellular side; it reads TESRMHWPGR…LYINFTLRRH (259 aa). Positions 32 to 55 are disordered; it reads EVHEMSKKGRPQRQRREVHEDAHK. A compositionally biased stretch (basic and acidic residues) spans 45 to 55; the sequence is QRREVHEDAHK. Arginine 125 serves as a coordination point for 4-aminobutanoate. An N-linked (GlcNAc...) asparagine glycan is attached at asparagine 140. A 4-aminobutanoate-binding site is contributed by serine 189. Cysteine 198 and cysteine 212 are oxidised to a cystine. Glutamate 217 lines the 4-aminobutanoate pocket. N-linked (GlcNAc...) asparagine glycosylation is found at asparagine 234 and asparagine 274. Residues 281–301 traverse the membrane as a helical segment; the sequence is IFFFLLQTYFPATLMVMLSWV. The Cytoplasmic portion of the chain corresponds to 302–313; that stretch reads SFWIDRRAVPAR. Residues 314–334 form a helical membrane-spanning segment; that stretch reads VPLGITTVLTMSTIITGVNAS. Residues 335-345 are Extracellular-facing; that stretch reads MPRVSYIKAVD. A helical transmembrane segment spans residues 346–366; the sequence is IYLWVSFVFVFLSVLEYAAVN. Topologically, residues 367 to 457 are cytoplasmic; that stretch reads YLTTVQERKE…MRIDTHAIDK (91 aa). Residues 458–478 traverse the membrane as a helical segment; sequence YSRIIFPAAYILFNLIYWSIF. Serine 479 is a topological domain (extracellular).

This sequence belongs to the ligand-gated ion channel (TC 1.A.9) family. Gamma-aminobutyric acid receptor (TC 1.A.9.5) subfamily. GABRR1 sub-subfamily. Three rho subunits (rho-1/GBRR1, rho-2/GBRR2 and rho-3/GBRR3) coassemble either to form functional homopentamers or heteropentamers. Rho-1/GBRR1 subunits can also associate with alpha-1/GBRA1 subunits to form a functional GABAAR. Interacts with SQSTM1. Highly expressed in the retina. Expressed in a lesser extent in brain, lung and thymus.

The protein localises to the postsynaptic cell membrane. Its subcellular location is the cell membrane. It catalyses the reaction chloride(in) = chloride(out). With respect to regulation, inhibited by TPMPA, a rho-specific antagonist, when forming a homopentamer. In contrast with other GABAARs, rho-1 GABAAR is not inhibited by bicuculline, when forming a homopentamer. Functionally, rho subunit of the pentameric ligand-gated chloride channels responsible for mediating the effects of gamma-aminobutyric acid (GABA), the major inhibitory neurotransmitter in the brain. Rho-containing GABA-gated chloride channels are a subclass of GABA(A) receptors (GABAARs) entirely composed of rho subunits, where GABA molecules bind at the rho intersubunit interfaces. When activated by GABA, rho-GABAARs selectively allow the flow of chloride anions across the cell membrane down their electrochemical gradient. Rho-1 subunits are primarily expressed in retina where rho-1-containing GABAARs may play a role in retinal neurotransmission. Rho-1 GABAARs are also involved in neuronal tonic (extrasynaptic) and phasic (synaptic) transmission in the Purkinje neurons of the cerebellum. Rho-1 GABAARs may also contribute to the regulation of glial development in the cerebellum by controlling extrasynaptic transmission. The sequence is that of Gamma-aminobutyric acid receptor subunit rho-1 from Homo sapiens (Human).